A 231-amino-acid chain; its full sequence is uncharacterized protein (231 aa).

Residues 1 to 17 (MFGKILTTSLLIAMTFA) form the signal peptide. The disordered stretch occupies residues 197–231 (KARKQQKNEGDDEETEDEQKIGSAIDGWVERQAKL).

This is an uncharacterized protein from Caenorhabditis elegans.